Here is a 107-residue protein sequence, read N- to C-terminus: uncharacterized protein (107 aa).

The tract at residues M1 to P32 is disordered. Basic and acidic residues predominate over residues D22 to E31.

This is an uncharacterized protein from Mus musculus (Mouse).